A 442-amino-acid chain; its full sequence is D-serine dehydratase (442 aa).

N6-(pyridoxal phosphate)lysine is present on K118.

It belongs to the serine/threonine dehydratase family. DsdA subfamily. In terms of assembly, monomer. Requires pyridoxal 5'-phosphate as cofactor.

It catalyses the reaction D-serine = pyruvate + NH4(+). This is D-serine dehydratase from Shigella sonnei (strain Ss046).